We begin with the raw amino-acid sequence, 199 residues long: Nucleoside triphosphate pyrophosphatase (199 aa).

The active-site Proton acceptor is the Asp76.

This sequence belongs to the Maf family. A divalent metal cation is required as a cofactor.

The protein resides in the cytoplasm. It carries out the reaction a ribonucleoside 5'-triphosphate + H2O = a ribonucleoside 5'-phosphate + diphosphate + H(+). The catalysed reaction is a 2'-deoxyribonucleoside 5'-triphosphate + H2O = a 2'-deoxyribonucleoside 5'-phosphate + diphosphate + H(+). Its function is as follows. Nucleoside triphosphate pyrophosphatase. May have a dual role in cell division arrest and in preventing the incorporation of modified nucleotides into cellular nucleic acids. In Roseobacter denitrificans (strain ATCC 33942 / OCh 114) (Erythrobacter sp. (strain OCh 114)), this protein is Nucleoside triphosphate pyrophosphatase.